The chain runs to 414 residues: Tyrosine--tRNA ligase (414 aa).

Tyr-40 is a binding site for L-tyrosine. The 'HIGH' region motif lies at 45–54 (ATAASLHVGH). L-tyrosine is bound by residues Tyr-175 and Gln-179. The short motif at 235–239 (KMGKS) is the 'KMSKS' region element. ATP is bound at residue Lys-238. Residues 349-414 (LTVVQLLAQT…KKKHRMVQLG (66 aa)) enclose the S4 RNA-binding domain.

This sequence belongs to the class-I aminoacyl-tRNA synthetase family. TyrS type 1 subfamily. In terms of assembly, homodimer.

The protein localises to the cytoplasm. It catalyses the reaction tRNA(Tyr) + L-tyrosine + ATP = L-tyrosyl-tRNA(Tyr) + AMP + diphosphate + H(+). Functionally, catalyzes the attachment of tyrosine to tRNA(Tyr) in a two-step reaction: tyrosine is first activated by ATP to form Tyr-AMP and then transferred to the acceptor end of tRNA(Tyr). The protein is Tyrosine--tRNA ligase of Paracoccus denitrificans (strain Pd 1222).